A 95-amino-acid polypeptide reads, in one-letter code: Integration host factor subunit beta (95 aa).

The tract at residues 56–76 (RAPRTGRNPKTGSSVDLEGKY) is disordered.

The protein belongs to the bacterial histone-like protein family. As to quaternary structure, heterodimer of an alpha and a beta chain.

Its function is as follows. This protein is one of the two subunits of integration host factor, a specific DNA-binding protein that functions in genetic recombination as well as in transcriptional and translational control. In Shewanella baltica (strain OS223), this protein is Integration host factor subunit beta.